A 257-amino-acid chain; its full sequence is MQTMTIKEAENVLKEIMNEEDDRFQLLMKDDRKGVQKLVLKWYKQKELEQKEKEKFFEMSKYENALREKGITYIAGIDEVGRGPLAGPVVTAAVVLPEDFYIPGLNDSKKLSEAKRERFYDEIKVQAIAIGVGIVSPQVIDDINIYQATKQAMLDAVANLSCTPQHLLIDAMKLPTPIPQTSIIKGDAKSVSISAASIIAKVTRDRMMKELGEKYPEYGFEQHMGYGTKQHLEAIEVHGVLDEHRKSFAPIKDMIQK.

The region spanning 72-257 (TYIAGIDEVG…FAPIKDMIQK (186 aa)) is the RNase H type-2 domain. Residues Asp-78, Glu-79, and Asp-170 each contribute to the a divalent metal cation site.

This sequence belongs to the RNase HII family. Requires Mn(2+) as cofactor. Mg(2+) serves as cofactor.

It localises to the cytoplasm. It carries out the reaction Endonucleolytic cleavage to 5'-phosphomonoester.. In terms of biological role, endonuclease that specifically degrades the RNA of RNA-DNA hybrids. In Bacillus cereus (strain B4264), this protein is Ribonuclease HII.